The sequence spans 76 residues: Small ribosomal subunit protein bS18 (76 aa).

The protein belongs to the bacterial ribosomal protein bS18 family. Part of the 30S ribosomal subunit. Forms a tight heterodimer with protein bS6.

Its function is as follows. Binds as a heterodimer with protein bS6 to the central domain of the 16S rRNA, where it helps stabilize the platform of the 30S subunit. In Aeromonas hydrophila subsp. hydrophila (strain ATCC 7966 / DSM 30187 / BCRC 13018 / CCUG 14551 / JCM 1027 / KCTC 2358 / NCIMB 9240 / NCTC 8049), this protein is Small ribosomal subunit protein bS18.